The chain runs to 322 residues: Mas-related G-protein coupled receptor member X1 (322 aa).

At 1-31 the chain is on the extracellular side; that stretch reads MDPTISTLDTELTPINGTEETLCYKQTLSLT. Asn16 carries an N-linked (GlcNAc...) asparagine glycan. The helical transmembrane segment at 32 to 52 threads the bilayer; that stretch reads VLTCIVSLVGLTGNAVVLWLL. The Cytoplasmic segment spans residues 53-67; that stretch reads GCRMRRNAFSIYILN. Residues 68 to 88 traverse the membrane as a helical segment; the sequence is LAAADFLFLSGRLIYSLLSFI. At 89–96 the chain is on the extracellular side; that stretch reads SIPHTISK. Residues 97-117 traverse the membrane as a helical segment; it reads ILYPVMMFSYFAGLSFLSAVS. Topologically, residues 118–144 are cytoplasmic; the sequence is TERCLSVLWPIWYRCHRPTHLSAVVCV. The helical transmembrane segment at 145-165 threads the bilayer; that stretch reads LLWALSLLRSILEWMLCGFLF. Topologically, residues 166–177 are extracellular; the sequence is SGADSAWCQTSD. Residues 178–198 form a helical membrane-spanning segment; that stretch reads FITVAWLIFLCVVLCGSSLVL. Residues 199 to 221 lie on the Cytoplasmic side of the membrane; the sequence is LIRILCGSRKIPLTRLYVTILLT. The helical transmembrane segment at 222–242 threads the bilayer; that stretch reads VLVFLLCGLPFGIQFFLFLWI. The Extracellular segment spans residues 243–254; that stretch reads HVDREVLFCHVH. A helical transmembrane segment spans residues 255 to 275; the sequence is LVSIFLSALNSSANPIIYFFV. Topologically, residues 276-322 are cytoplasmic; sequence GSFRQRQNRQNLKLVLQRALQDASEVDEGGGQLPEEILELSGSRLEQ.

It belongs to the G-protein coupled receptor 1 family. Mas subfamily. In terms of tissue distribution, uniquely localized in a subset of small dorsal root and trigeminal sensory neurons.

It is found in the cell membrane. Functionally, orphan receptor. Probably involved in the function of nociceptive neurons. May regulate nociceptor function and/or development, including the sensation or modulation of pain. Potently activated by enkephalins including BAM22 (bovine adrenal medulla peptide 22) and BAM (8-22). BAM22 is the most potent compound and evoked a large and dose-dependent release of intracellular calcium in stably transfected cells. G(alpha)q proteins are involved in the calcium-signaling pathway. Activated by the antimalarial drug, chloroquine. May mediate chloroquine-induced itch, in a histamine-independent manner. In Homo sapiens (Human), this protein is Mas-related G-protein coupled receptor member X1 (MRGPRX1).